The following is a 351-amino-acid chain: ATP-dependent protease ATP-binding subunit-like protein (351 aa).

The disordered stretch occupies residues 1–26 (MPYITDMLRDRNSAATPPAEERSEPV). 79-86 (GPTGVGKT) contributes to the ATP binding site.

It belongs to the ClpA/ClpB family.

The sequence is that of ATP-dependent protease ATP-binding subunit-like protein from Rhodococcus erythropolis (Arthrobacter picolinophilus).